Reading from the N-terminus, the 245-residue chain is Orotidine 5'-phosphate decarboxylase (245 aa).

Residues Asp22, Lys44, 71 to 80, Thr131, Arg192, Gln201, Gly221, and Arg222 each bind substrate; that span reads DLKFHDIPNT. Residue Lys73 is the Proton donor of the active site.

The protein belongs to the OMP decarboxylase family. Type 1 subfamily. As to quaternary structure, homodimer.

It carries out the reaction orotidine 5'-phosphate + H(+) = UMP + CO2. It functions in the pathway pyrimidine metabolism; UMP biosynthesis via de novo pathway; UMP from orotate: step 2/2. Catalyzes the decarboxylation of orotidine 5'-monophosphate (OMP) to uridine 5'-monophosphate (UMP). The polypeptide is Orotidine 5'-phosphate decarboxylase (Escherichia coli O6:K15:H31 (strain 536 / UPEC)).